The sequence spans 557 residues: Nucleoprotein (557 aa).

The interval 54-235 (MRKDKRSDDD…ITKEESANNI (182 aa)) is binding site for the cap structure m7GTP. The Mn(2+) site is built by D379 and E381. Positions 389, 496, 499, and 518 each coordinate Zn(2+). D522 lines the Mn(2+) pocket.

Belongs to the arenaviridae nucleocapsid protein family. Homomultimerizes to form the nucleocapsid. Binds to viral genomic RNA. Interacts with glycoprotein G2. Interacts with protein Z; this interaction probably directs the encapsidated genome to budding sites. Interacts with protein L; this interaction does not interfere with Z-L interaction. Interacts with host IKBKE (via Protein kinase domain); the interaction inhibits IKBKE kinase activity.

It is found in the virion. The protein resides in the host cytoplasm. In terms of biological role, encapsidates the genome, protecting it from nucleases. The encapsidated genomic RNA is termed the nucleocapsid (NC). Serves as template for viral transcription and replication. The increased presence of protein N in host cell does not seem to trigger the switch from transcription to replication as observed in other negative strain RNA viruses. Through the interaction with host IKBKE, strongly inhibits the phosphorylation and nuclear translocation of host IRF3, a protein involved in interferon activation pathway, leading to the inhibition of interferon-beta and IRF3-dependent promoters activation. Also encodes a functional 3'-5' exoribonuclease that degrades preferentially dsRNA substrates and thereby participates in the suppression of interferon induction. The protein is Nucleoprotein of Calomys callosus (Large vesper mouse).